Reading from the N-terminus, the 234-residue chain is Zinc finger BED domain-containing protein 3 (234 aa).

Residues 19–42 (AAARGGQCPGLGPAPTPTPPGRLG) form a disordered region. Residues 43 to 104 (APYSEAWGYF…SAHRRELESS (62 aa)) form a BED-type zinc finger. Positions 69, 72, 92, and 97 each coordinate Zn(2+). Disordered stretches follow at residues 94–126 (RSAH…AAPE) and 202–225 (REGA…GDRD). Residues 111–122 (PAAPCPPPPGPA) are compositionally biased toward pro residues. Basic and acidic residues predominate over residues 216 to 225 (LKDDPEGDRD).

In terms of assembly, associates with the subcortical maternal complex (SCMC) composed of at least NLRP5, KHDC3L, OOEP, and TLE6 via interaction with NLRP5 and TLE6. Interacts with AXIN1; the interaction is direct, enhanced by protein kinase GSK3B and casein kinase CSNK1E activities and decreases GSK3B-induced beta-catenin serine and threonine phosphorylations. As to expression, secreted in blood plasma, and expressed in skeletal muscle and adipose tissue (at protein level).

Its subcellular location is the cytoplasm. It localises to the membrane. It is found in the secreted. Acts as a positive regulator in the activation of the canonical Wnt/beta-catenin signaling pathway by stabilizing cytoplasmic beta-catenin. Involved in transcription activation of Wnt target gene expression. Plays a role in symmetric division of blastomeres in the early stages of embryogenesis via regulation of mitotic spindle central positioning and organization of the F-actin filament network. Plays a role in regulating the distribution of cellular organelles, via modulation of cytoskeletal dynamics and cytoplasmic lattice formation. The polypeptide is Zinc finger BED domain-containing protein 3 (ZBED3) (Homo sapiens (Human)).